Here is a 549-residue protein sequence, read N- to C-terminus: 65-kDa microtubule-associated protein 9 (549 aa).

Coiled coils occupy residues 36–123, 160–199, and 459–492; these read IEIE…ERKI, SLRK…CSVL, and GNRL…HQGQ. A disordered region spans residues 474–549; that stretch reads EEKEQERRRK…SFSTPLSRHG (76 aa). The segment covering 481-490 has biased composition (basic residues); that stretch reads RRKRDLKKHQ. Residues S501 and S546 each carry the phosphoserine modification. Residues 514-549 are compositionally biased toward polar residues; that stretch reads VSTNKRFVSSPHTPQTDSPHSAKSNQSFSTPLSRHG.

It belongs to the MAP65/ASE1 family. Forms dimer. Binds to microtubules (MT).

It is found in the nucleus. The protein resides in the cytoplasm. The protein localises to the cytoskeleton. It localises to the spindle pole. In Arabidopsis thaliana (Mouse-ear cress), this protein is 65-kDa microtubule-associated protein 9 (MAP65-9).